Here is a 138-residue protein sequence, read N- to C-terminus: U1 small nuclear ribonucleoprotein C (138 aa).

Residues 4 to 36 (FYCDYCDTYLTHDSPSVRKTHCSGRKHKENVRD) form a Matrin-type zinc finger. Residue Tyr-8 is modified to Phosphotyrosine. At Ser-17 the chain carries Phosphoserine. Position 52 is an N6-acetyllysine (Lys-52). A disordered region spans residues 62–99 (IPPNLFSAPPLGGPMIPPPHPSMMGPPPPGMMPVGPPP). The span at 72-99 (LGGPMIPPPHPSMMGPPPPGMMPVGPPP) shows a compositional bias: pro residues.

It belongs to the U1 small nuclear ribonucleoprotein C family. As to quaternary structure, component of the U1 snRNP. The U1 snRNP is composed of the U1 snRNA and the 7 core Sm proteins SNRPB, SNRPD1, SNRPD2, SNRPD3, SNRPE, SNRPF and SNRPG that assemble in a heptameric protein ring on the Sm site of the small nuclear RNA to form the core snRNP, and at least 3 U1 snRNP-specific proteins SNRNP70/U1-70K, SNRPA/U1-A and SNRPC/U1-C. SNRPC/U1-C interacts with U1 snRNA and the 5' splice-site region of the pre-mRNA. Interacts (via N-terminus) with TIA1 (via C-terminus); thereby promoting spliceosomal U1 snRNP recruitment to 5' splice sites.

The protein resides in the nucleus. In terms of biological role, component of the spliceosomal U1 snRNP, which is essential for recognition of the pre-mRNA 5' splice-site and the subsequent assembly of the spliceosome. SNRPC/U1-C is directly involved in initial 5' splice-site recognition for both constitutive and regulated alternative splicing. The interaction with the 5' splice-site seems to precede base-pairing between the pre-mRNA and the U1 snRNA. Stimulates commitment or early (E) complex formation by stabilizing the base pairing of the 5' end of the U1 snRNA and the 5' splice-site region. This chain is U1 small nuclear ribonucleoprotein C, found in Monodelphis domestica (Gray short-tailed opossum).